Here is a 175-residue protein sequence, read N- to C-terminus: Ribosome maturation factor RimM (175 aa).

One can recognise a PRC barrel domain in the interval glutamate 99–leucine 172.

Belongs to the RimM family. In terms of assembly, binds ribosomal protein uS19.

The protein localises to the cytoplasm. An accessory protein needed during the final step in the assembly of 30S ribosomal subunit, possibly for assembly of the head region. Essential for efficient processing of 16S rRNA. May be needed both before and after RbfA during the maturation of 16S rRNA. It has affinity for free ribosomal 30S subunits but not for 70S ribosomes. This is Ribosome maturation factor RimM from Synechococcus sp. (strain WH7803).